The primary structure comprises 214 residues: Large ribosomal subunit protein uL3 (214 aa).

Gln151 carries the post-translational modification N5-methylglutamine.

Belongs to the universal ribosomal protein uL3 family. In terms of assembly, part of the 50S ribosomal subunit. Forms a cluster with proteins L14 and L19. Post-translationally, methylated by PrmB.

In terms of biological role, one of the primary rRNA binding proteins, it binds directly near the 3'-end of the 23S rRNA, where it nucleates assembly of the 50S subunit. This is Large ribosomal subunit protein uL3 from Saccharophagus degradans (strain 2-40 / ATCC 43961 / DSM 17024).